We begin with the raw amino-acid sequence, 161 residues long: Cytochrome c-type biogenesis protein CcmE (161 aa).

At 1–8 (MNPRRKKR) the chain is on the cytoplasmic side. The helical; Signal-anchor for type II membrane protein transmembrane segment at 9 to 29 (LGIVLAIFIGISATIGLMLYA) threads the bilayer. Topologically, residues 30–161 (LNQNMDLFYT…SSEQKQGSGE (132 aa)) are periplasmic. The heme site is built by His-129 and Tyr-133. The interval 142–161 (MKKTHEPLQYSSEQKQGSGE) is disordered. The span at 150 to 161 (QYSSEQKQGSGE) shows a compositional bias: polar residues.

It belongs to the CcmE/CycJ family.

It localises to the cell inner membrane. Heme chaperone required for the biogenesis of c-type cytochromes. Transiently binds heme delivered by CcmC and transfers the heme to apo-cytochromes in a process facilitated by CcmF and CcmH. The polypeptide is Cytochrome c-type biogenesis protein CcmE (Vibrio parahaemolyticus serotype O3:K6 (strain RIMD 2210633)).